Consider the following 318-residue polypeptide: uncharacterized protein (318 aa).

Positions 1-22 (MKASQERSEARRTAHSVKEKKY) are enriched in basic and acidic residues. Disordered regions lie at residues 1–29 (MKAS…ASPR) and 293–318 (DDGD…DDDE).

This is an uncharacterized protein from Ictalurid herpesvirus 1 (strain Auburn) (IcHV-1).